A 540-amino-acid chain; its full sequence is Anti-sigma-I factor RsgI7 (540 aa).

One can recognise a RsgI N-terminal anti-sigma domain in the interval 1-48 (MRAMVVDMNDKYAVVVNKEGQYIKIKRKAEHRLGYQVELPDRVIGFER). Residues 1–50 (MRAMVVDMNDKYAVVVNKEGQYIKIKRKAEHRLGYQVELPDRVIGFERRT) are Cytoplasmic-facing. A helical membrane pass occupies residues 51–73 (LLKVVSVAAALLIVSSISFAVYS). Topologically, residues 74-540 (YNLPYSYVNV…PGKEILKKRC (467 aa)) are extracellular. 5 stretches are compositionally biased toward basic and acidic residues: residues 238–256 (DIKK…KKVN), 319–329 (SGIDKGNKDSK), 338–351 (NDVK…KTNS), 359–370 (VSKDNKNDKADG), and 398–419 (SKDD…EDNK). Disordered regions lie at residues 238–429 (DIKK…CPQY) and 481–540 (QEEQ…KKRC). A coiled-coil region spans residues 451-501 (KEDMTKQNDEWFKKMQEEQKKQYDEWLKKMQEEQKKQHDEWVKKMEEMKNT).

In terms of assembly, interacts (via RsgI N-terminal anti-sigma domain) with SigI7.

It is found in the cell membrane. In terms of biological role, anti-sigma factor for SigI7. Negatively regulates SigI7 activity through direct interaction. In Acetivibrio thermocellus (strain ATCC 27405 / DSM 1237 / JCM 9322 / NBRC 103400 / NCIMB 10682 / NRRL B-4536 / VPI 7372) (Clostridium thermocellum), this protein is Anti-sigma-I factor RsgI7.